The primary structure comprises 249 residues: Transcriptional activator protein EsaR (249 aa).

One can recognise an HTH luxR-type domain in the interval 174-239; it reads QSADKTIFSS…QAIRLGVELD (66 aa). Residues 198–217 constitute a DNA-binding region (H-T-H motif); sequence YAEIAAITGISVSTVKFHIK.

The protein belongs to the autoinducer-regulated transcriptional regulatory protein family.

Functionally, functions as a potential OhlL-responsive transcriptional regulator. The polypeptide is Transcriptional activator protein EsaR (esaR) (Pantoea stewartii subsp. stewartii (Erwinia stewartii)).